A 400-amino-acid polypeptide reads, in one-letter code: Large envelope protein (400 aa).

At Met-1 the chain carries N-acetylmethionine. Gly-2 carries the N-myristoyl glycine; by host lipid modification. The pre-S1 stretch occupies residues 2–119; it reads GAPLSTTRRG…PPLRDTHPQA (118 aa). The interval 2-174 is pre-S; the sequence is GAPLSTTRRG…SSKTGGPAMN (173 aa). The Virion surface; in external conformation segment spans residues 2-181; that stretch reads GAPLSTTRRG…AMNMENITSG (180 aa). At 2 to 253 the chain is on the intravirion; in internal conformation side; the sequence is GAPLSTTRRG…PGYRWMCLRR (252 aa). N-linked (GlcNAc...) asparagine glycosylation occurs at Pro-4. The interval 84–110 is disordered; that stretch reads VLTTLPADPPPASTNRLSGRKPTQVSP. Residues 96–109 show a composition bias toward polar residues; that stretch reads STNRLSGRKPTQVS. The pre-S2 stretch occupies residues 120–174; the sequence is MQWNSTHFHQALLDPRVRALYFPAGGSSSGTQNPAPTIASLTSSISSKTGGPAMN. A helical transmembrane segment spans residues 182-202; that stretch reads LLGPLRVLQAVCFLLTKILTI. Over 203 to 253 the chain is Intravirion; in external conformation; that stretch reads PQSLDSWWTSLNFLGGLPRCPGQNSQSPTSNHLPTSCPPTCPGYRWMCLRR. Residues 254–274 traverse the membrane as a helical segment; it reads FIIFLFILLLCLIFLLVLLDY. Over 275–348 the chain is Virion surface; that stretch reads QGMLPVCPLL…WASARFSWLS (74 aa). Asn-320 is a glycosylation site (N-linked (GlcNAc...) asparagine; by host). Residues 349–369 traverse the membrane as a helical segment; the sequence is LLVQFVQWCVGLSPTVWLLVI. Residues 370–375 lie on the Intravirion side of the membrane; the sequence is WMIWYW. A helical transmembrane segment spans residues 376 to 398; that stretch reads GPNLCSILSPFIPLLPIFCYLWV. Over 399–400 the chain is Virion surface; that stretch reads SI.

It belongs to the orthohepadnavirus major surface antigen family. In its internal form (Li-HBsAg), interacts with the capsid protein and with the isoform S. Interacts with host chaperone CANX. As to quaternary structure, associates with host chaperone CANX through its pre-S2 N glycan; this association may be essential for isoform M proper secretion. In terms of assembly, interacts with isoform L. Interacts with the antigens of satellite virus HDV (HDVAgs); this interaction is required for encapsidation of HDV genomic RNA. Isoform M is N-terminally acetylated by host at a ratio of 90%, and N-glycosylated by host at the pre-S2 region. In terms of processing, myristoylated.

Its subcellular location is the virion membrane. Its function is as follows. The large envelope protein exists in two topological conformations, one which is termed 'external' or Le-HBsAg and the other 'internal' or Li-HBsAg. In its external conformation the protein attaches the virus to cell receptors and thereby initiating infection. This interaction determines the species specificity and liver tropism. This attachment induces virion internalization predominantly through caveolin-mediated endocytosis. The large envelope protein also assures fusion between virion membrane and endosomal membrane. In its internal conformation the protein plays a role in virion morphogenesis and mediates the contact with the nucleocapsid like a matrix protein. In terms of biological role, the middle envelope protein plays an important role in the budding of the virion. It is involved in the induction of budding in a nucleocapsid independent way. In this process the majority of envelope proteins bud to form subviral lipoprotein particles of 22 nm of diameter that do not contain a nucleocapsid. The chain is Large envelope protein from Homo sapiens (Human).